Here is a 652-residue protein sequence, read N- to C-terminus: 2-oxoglutarate carboxylase large subunit (652 aa).

The Pyruvate carboxyltransferase domain maps to 26 to 288 (ILITDLTPRD…DTGIDMKKLD (263 aa)). Residues 34-38 (RDGQQ) and R105 contribute to the substrate site. D35 is an a divalent metal cation binding site. Residues K196, H227, and H229 each contribute to the a divalent metal cation site. Residue K196 is modified to N6-carboxylysine. Residue T362 participates in substrate binding. The Biotinyl-binding domain occupies 563-643 (AEEKGIPKAT…TPDDALLRIK (81 aa)). An N6-biotinyllysine modification is found at K609.

Heterohexadecamer of 8 large subunits and 8 small subunits. Mg(2+) serves as cofactor. Mn(2+) is required as a cofactor. It depends on Co(2+) as a cofactor. In terms of processing, biotinylated.

It catalyses the reaction hydrogencarbonate + 2-oxoglutarate + ATP = (S)-oxalosuccinate + ADP + phosphate + H(+). This Hydrogenobacter thermophilus (strain DSM 6534 / IAM 12695 / TK-6) protein is 2-oxoglutarate carboxylase large subunit.